We begin with the raw amino-acid sequence, 98 residues long: Integration host factor subunit alpha (98 aa).

Belongs to the bacterial histone-like protein family. Heterodimer of an alpha and a beta chain.

In terms of biological role, this protein is one of the two subunits of integration host factor, a specific DNA-binding protein that functions in genetic recombination as well as in transcriptional and translational control. This is Integration host factor subunit alpha from Acinetobacter baumannii (strain AB307-0294).